We begin with the raw amino-acid sequence, 90 residues long: Small ribosomal subunit protein bS18 (90 aa).

It belongs to the bacterial ribosomal protein bS18 family. In terms of assembly, part of the 30S ribosomal subunit. Forms a tight heterodimer with protein bS6.

Functionally, binds as a heterodimer with protein bS6 to the central domain of the 16S rRNA, where it helps stabilize the platform of the 30S subunit. The polypeptide is Small ribosomal subunit protein bS18 (Bacteroides fragilis (strain YCH46)).